The chain runs to 135 residues: ATP synthase epsilon chain (135 aa).

It belongs to the ATPase epsilon chain family. As to quaternary structure, F-type ATPases have 2 components, CF(1) - the catalytic core - and CF(0) - the membrane proton channel. CF(1) has five subunits: alpha(3), beta(3), gamma(1), delta(1), epsilon(1). CF(0) has three main subunits: a, b and c.

The protein resides in the cell inner membrane. Its function is as follows. Produces ATP from ADP in the presence of a proton gradient across the membrane. This chain is ATP synthase epsilon chain, found in Rhizobium rhizogenes (strain K84 / ATCC BAA-868) (Agrobacterium radiobacter).